The primary structure comprises 617 residues: Chaperone protein HscA homolog (617 aa).

It belongs to the heat shock protein 70 family.

Functionally, chaperone involved in the maturation of iron-sulfur cluster-containing proteins. Has a low intrinsic ATPase activity which is markedly stimulated by HscB. This chain is Chaperone protein HscA homolog, found in Actinobacillus pleuropneumoniae serotype 5b (strain L20).